The chain runs to 114 residues: uncharacterized protein (114 aa).

2 helical membrane-spanning segments follow: residues 14–34 and 75–95; these read VMSAIFKWLLLYSLPALCFLL and VIIILVPCWWHAVIVTQHPVA.

It is found in the membrane. This is an uncharacterized protein from Homo sapiens (Human).